The following is a 339-amino-acid chain: Protoheme IX farnesyltransferase (339 aa).

The disordered stretch occupies residues 1 to 27; that stretch reads MTVADPRLTDAPAHSRTSLLGRRRGGR. The next 9 membrane-spanning stretches (helical) occupy residues 45–65, 67–87, 117–136, 140–159, 165–185, 191–211, 236–256, 257–277, and 309–329; these read IVEL…GGLP, GWLI…ANTL, ALVF…VAFV, SAAL…TLLL, QNIV…WTAV, WAPF…YWPL, VSRQ…LLVP, LGGA…GFLV, and PMGV…AVAV.

This sequence belongs to the UbiA prenyltransferase family. Protoheme IX farnesyltransferase subfamily.

Its subcellular location is the cell membrane. The catalysed reaction is heme b + (2E,6E)-farnesyl diphosphate + H2O = Fe(II)-heme o + diphosphate. It functions in the pathway porphyrin-containing compound metabolism; heme O biosynthesis; heme O from protoheme: step 1/1. Converts heme B (protoheme IX) to heme O by substitution of the vinyl group on carbon 2 of heme B porphyrin ring with a hydroxyethyl farnesyl side group. The polypeptide is Protoheme IX farnesyltransferase (Kineococcus radiotolerans (strain ATCC BAA-149 / DSM 14245 / SRS30216)).